The primary structure comprises 900 residues: MSLAEDWIDPNSSEDSDIQEDAELEYTADNPEKEQRGVFSLEKVQLQFPVSIRCLAVENNILVMALTSDKLMIVDLERPEDIIDIELPKKVLALGLTYKIFLDPSGHYIFVTTTAGDNCLFTPSHQGRVLTKLKGHTVEAVQWNLNGGNILELLIASKSGVLLELVLTLDSANLKRIEKSINTLYSFPFMESPMGILKNIQDDSMTIVTNKRILRFEPKTSRGKDQLYFSPAFQGSMKEILSFSEEETAQCFSYSPFPKNLAEPYTLALKTSKRIIYLDIMNPVNPDIQDYEFNESPKLSVPTVEMNMILTSFHLAFLDLDTLYIVNRVNGKESYQQRVNLSPHEEILGLCCDHEKNTYWLYTTDSLHELVVNNETREASLVFLEKGDFEKALECANTAKVRNTVLVGYAEFLMEHEEYERAATLYAETLKSVEEVALKFIELNQKDVLRLYLWKKLRSYKSTMKIQKSLLVNWLLELMLAKLNSLDEKERLELFPENVMQQRQQVQREFSTLLNQYKDEINREAAYNLANNYGKEEQLLQIATVMKDQSYIMHYWVQRENYEKALETLNEGVSQETLIQHATALLTHRPNETVSIWERQTDLDVHALIPSLLSYNQRSHVPVEENAAIRYLRYVTGVLGCVDPSIHNTLFCIYACHSSSNESYLMNYIEQQGNHPLYDMDLGIRLCLQFNCRRSAVKILVLMKLYSQGVELALEADDCELAATIANIPEEDVVLKKTLWQTIAKYMFSKKSGIKETLRFLENSEVLQLPELIRLLPEDIKLDDLSDNVCDELDHCMKRIEQLDFEIGQASEVAHEIQTNAENMRNRYIVLEPNESCWHCNQPLFSEPFVLFPCQHAFHRSCMLEKTYKLASEKNILKECQLCGPSYAVRLINEPFSTDF.

Residues 1 to 20 (MSLAEDWIDPNSSEDSDIQE) form a disordered region. 4 TPR repeats span residues 314–345 (HLAFLDLDTLYIVNRVNGKESYQQRVNLSPHE), 373–406 (NNETREASLVFLEKGDFEKALECANTAKVRNTVL), 408–436 (GYAEFLMEHEEYERAATLYAETLKSVEEV), and 546–579 (MKDQSYIMHYWVQRENYEKALETLNEGVSQETLI). The stretch at 602 to 756 (DLDVHALIPS…MFSKKSGIKE (155 aa)) is one CHCR repeat. The segment at 837–884 (CWHCNQPLFSEPFVLFPCQHAFHRSCMLEKTYKLASEKNILKECQLCG) adopts an RING-type; atypical zinc-finger fold.

Belongs to the VPS18 family.

The protein localises to the vacuole membrane. Functionally, required for vacuolar biogenesis. This Schizosaccharomyces pombe (strain 972 / ATCC 24843) (Fission yeast) protein is Vacuolar membrane protein pep3 (pep3).